We begin with the raw amino-acid sequence, 317 residues long: MVRENKAAWKAQYFLKVVELFDEYPKCFIVGADNVGSKQMQNIRTSLRGLGVVLMGKNTMMRKAIRGHLENNAQLEKLLPHIKGNVGFVFTKGDLAEVRDKLLESKVRAPARAGAIAPLPVIIPAQNTGLGPEKTSFFQALSIPTKISKGTIEIINDVPILKPGDKVGASEATLLNMLNISPFSYGLAITQVYDSGSIFSPEILDIKPEDLRAKFQAGVANLAAVSLQIGYPTIASAPHSIANGFKNLLAIAASTEVEFKQAATIKEFIKDPSKFVAAAAASAPAAGAGAAAEKKEEAKKEESESEEDDDMGFGLFD.

The tract at residues Ala286 to Asp317 is disordered. Residues Ala292 to Glu302 are compositionally biased toward basic and acidic residues.

Belongs to the universal ribosomal protein uL10 family. In terms of assembly, P0 forms a pentameric complex by interaction with dimers of P1 and P2. Post-translationally, phosphorylated.

Its function is as follows. Ribosomal protein P0 is the functional equivalent of E.coli protein L10. This chain is Large ribosomal subunit protein uL10 (RpLP0), found in Ceratitis capitata (Mediterranean fruit fly).